The chain runs to 466 residues: Alpha-1A adrenergic receptor (466 aa).

Residues 1 to 27 (MVLLSENASEGSNCTHPPAQVNISKAI) lie on the Extracellular side of the membrane. 3 N-linked (GlcNAc...) asparagine glycosylation sites follow: asparagine 7, asparagine 13, and asparagine 22. The chain crosses the membrane as a helical span at residues 28–51 (LLGVILGGLIIFGVLGNILVILSV). Over 52 to 64 (ACHRHLHSVTHYY) the chain is Cytoplasmic. Residues 65-88 (IVNLAVADLLLTSTVLPFSAIFEI) traverse the membrane as a helical segment. Topologically, residues 89–99 (LGYWAFGRVFC) are extracellular. Residues cysteine 99 and cysteine 176 are joined by a disulfide bond. Residues 100–122 (NIWAAVDVLCCTASIMGLCIISI) traverse the membrane as a helical segment. The Cytoplasmic segment spans residues 123–143 (DRYIGVSYPLRYPTIVTQRRG). The chain crosses the membrane as a helical span at residues 144–167 (VRALLCVWALSLVISIGPLFGWRQ). The Extracellular portion of the chain corresponds to 168–181 (QAPEDETICQINEE). The helical transmembrane segment at 182 to 205 (PGYVLFSALGSFYVPLTIILVMYC) threads the bilayer. The Cytoplasmic segment spans residues 206–273 (RVYVVAKRES…FSREKKAAKT (68 aa)). Phosphoserine; by PKA is present on serine 215. Residues 274–297 (LGIVVGCFVLCWLPFFLVMPIGSF) form a helical membrane-spanning segment. The Extracellular segment spans residues 298-305 (FPNFKPPE). A helical transmembrane segment spans residues 306 to 329 (TVFKIVFWLGYLNSCINPIIYPCS). Residues 330–466 (SQEFKKAFQN…ISLGENGEEV (137 aa)) lie on the Cytoplasmic side of the membrane. The Nuclear localization signal motif lies at 334–349 (KKAFQNVLRIQCLRRR). Cysteine 345 carries S-palmitoyl cysteine lipidation.

Belongs to the G-protein coupled receptor 1 family. Adrenergic receptor subfamily. ADRA1A sub-subfamily. As to quaternary structure, homo- and heterooligomer. Heterooligomerizes with ADRA1B homooligomers in cardiac myocytes. Interacts with CAVIN4.

It localises to the nucleus membrane. It is found in the cell membrane. Its subcellular location is the cytoplasm. The protein resides in the membrane. The protein localises to the caveola. This alpha-adrenergic receptor mediates its action by association with G proteins that activate a phosphatidylinositol-calcium second messenger system. Its effect is mediated by G(q) and G(11) proteins. Nuclear ADRA1A-ADRA1B heterooligomers regulate phenylephrine (PE)-stimulated ERK signaling in cardiac myocytes. The chain is Alpha-1A adrenergic receptor (Adra1a) from Mus musculus (Mouse).